A 220-amino-acid polypeptide reads, in one-letter code: Ribonuclease HII (220 aa).

The 189-residue stretch at 32 to 220 folds into the RNase H type-2 domain; that stretch reads KHIAGIDEAG…FAPIKGRFDC (189 aa). Aspartate 38, glutamate 39, and aspartate 130 together coordinate a divalent metal cation.

This sequence belongs to the RNase HII family. Requires Mn(2+) as cofactor. The cofactor is Mg(2+).

It is found in the cytoplasm. It carries out the reaction Endonucleolytic cleavage to 5'-phosphomonoester.. Its function is as follows. Endonuclease that specifically degrades the RNA of RNA-DNA hybrids. This is Ribonuclease HII from Brucella suis (strain ATCC 23445 / NCTC 10510).